The following is a 503-amino-acid chain: 12-dehydrotetracycline 5-monooxygenase/anhydrotetracycline 6-monooxygenase (503 aa).

Residues T13, 32–33 (ER), L44, Q99, V123, T160, D288, and 301–302 (LN) each bind FAD.

It belongs to the PheA/TfdB FAD monooxygenase family. As to quaternary structure, monomer. FAD serves as cofactor.

The catalysed reaction is 5a,11a-dehydrotetracycline + NADPH + O2 + H(+) = 5a,11a-dehydrooxytetracycline + NADP(+) + H2O. It catalyses the reaction anhydrotetracycline + NADPH + O2 + H(+) = 5a,11a-dehydrotetracycline + NADP(+) + H2O. It functions in the pathway antibiotic biosynthesis; oxytetracycline biosynthesis. In terms of biological role, involved in the biosynthesis of the antibiotics oxytetracycline and tetracycline. OxyS starts by catalyzing the stereospecific hydroxylation of anhydrotetracycline at C(6) position to yield 5a,11a-dehydrotetracycline (12-dehydrotetracycline). If the released product is captured by OxyR, it is reduced to tetracycline. However, if the released product is recaptured by OxyS, it performs an additional hydroxylation at C(5), producing 5a,11a-dehydrooxytetracycline, which, following the action of OxyR becomes oxytetracycline. This Streptomyces rimosus subsp. rimosus (strain ATCC 10970 / DSM 40260 / JCM 4667 / NRRL 2234) protein is 12-dehydrotetracycline 5-monooxygenase/anhydrotetracycline 6-monooxygenase.